The primary structure comprises 212 residues: ATP-dependent Clp protease proteolytic subunit (212 aa).

Catalysis depends on Ser-114, which acts as the Nucleophile. His-139 is a catalytic residue.

Belongs to the peptidase S14 family. As to quaternary structure, fourteen ClpP subunits assemble into 2 heptameric rings which stack back to back to give a disk-like structure with a central cavity, resembling the structure of eukaryotic proteasomes.

It localises to the cytoplasm. The catalysed reaction is Hydrolysis of proteins to small peptides in the presence of ATP and magnesium. alpha-casein is the usual test substrate. In the absence of ATP, only oligopeptides shorter than five residues are hydrolyzed (such as succinyl-Leu-Tyr-|-NHMec, and Leu-Tyr-Leu-|-Tyr-Trp, in which cleavage of the -Tyr-|-Leu- and -Tyr-|-Trp bonds also occurs).. Functionally, cleaves peptides in various proteins in a process that requires ATP hydrolysis. Has a chymotrypsin-like activity. Plays a major role in the degradation of misfolded proteins. This Laribacter hongkongensis (strain HLHK9) protein is ATP-dependent Clp protease proteolytic subunit.